A 310-amino-acid polypeptide reads, in one-letter code: tRNA-cytidine(32) 2-sulfurtransferase (310 aa).

The PP-loop motif signature appears at 45–50 (SGGKDS). Residues Cys-120, Cys-123, and Cys-211 each contribute to the [4Fe-4S] cluster site.

Belongs to the TtcA family. In terms of assembly, homodimer. Mg(2+) serves as cofactor. The cofactor is [4Fe-4S] cluster.

The protein resides in the cytoplasm. The enzyme catalyses cytidine(32) in tRNA + S-sulfanyl-L-cysteinyl-[cysteine desulfurase] + AH2 + ATP = 2-thiocytidine(32) in tRNA + L-cysteinyl-[cysteine desulfurase] + A + AMP + diphosphate + H(+). Its pathway is tRNA modification. In terms of biological role, catalyzes the ATP-dependent 2-thiolation of cytidine in position 32 of tRNA, to form 2-thiocytidine (s(2)C32). The sulfur atoms are provided by the cysteine/cysteine desulfurase (IscS) system. The chain is tRNA-cytidine(32) 2-sulfurtransferase from Shewanella oneidensis (strain ATCC 700550 / JCM 31522 / CIP 106686 / LMG 19005 / NCIMB 14063 / MR-1).